Here is a 418-residue protein sequence, read N- to C-terminus: Gamma-glutamyl phosphate reductase (418 aa).

The protein belongs to the gamma-glutamyl phosphate reductase family.

It localises to the cytoplasm. The enzyme catalyses L-glutamate 5-semialdehyde + phosphate + NADP(+) = L-glutamyl 5-phosphate + NADPH + H(+). It functions in the pathway amino-acid biosynthesis; L-proline biosynthesis; L-glutamate 5-semialdehyde from L-glutamate: step 2/2. Catalyzes the NADPH-dependent reduction of L-glutamate 5-phosphate into L-glutamate 5-semialdehyde and phosphate. The product spontaneously undergoes cyclization to form 1-pyrroline-5-carboxylate. The chain is Gamma-glutamyl phosphate reductase from Histophilus somni (strain 129Pt) (Haemophilus somnus).